The following is a 428-amino-acid chain: Aspartate--tRNA(Asp) ligase (428 aa).

E170 provides a ligand contact to L-aspartate. The tract at residues 192 to 195 (QLYK) is aspartate. Residue R213 participates in L-aspartate binding. ATP contacts are provided by residues 213 to 215 (RAE) and E351. Mg(2+) contacts are provided by E351 and S354. L-aspartate-binding residues include S354 and R358. Residue 399 to 402 (GFNR) participates in ATP binding.

It belongs to the class-II aminoacyl-tRNA synthetase family. Type 2 subfamily. Homodimer. Mg(2+) is required as a cofactor.

It localises to the cytoplasm. The catalysed reaction is tRNA(Asp) + L-aspartate + ATP = L-aspartyl-tRNA(Asp) + AMP + diphosphate. Its function is as follows. Catalyzes the attachment of L-aspartate to tRNA(Asp) in a two-step reaction: L-aspartate is first activated by ATP to form Asp-AMP and then transferred to the acceptor end of tRNA(Asp). The sequence is that of Aspartate--tRNA(Asp) ligase from Pyrobaculum aerophilum (strain ATCC 51768 / DSM 7523 / JCM 9630 / CIP 104966 / NBRC 100827 / IM2).